An 842-amino-acid polypeptide reads, in one-letter code: Elongation factor 2 (842 aa).

Positions 17–346 (TNVRNMSVIA…MIVLHLPSPV (330 aa)) constitute a tr-type G domain. Residues 26–33 (AHVDHGKS), 158–161 (NKVD), and 213–215 (SGL) each bind GTP. H699 carries the diphthamide modification.

Belongs to the TRAFAC class translation factor GTPase superfamily. Classic translation factor GTPase family. EF-G/EF-2 subfamily.

It localises to the cytoplasm. It carries out the reaction GTP + H2O = GDP + phosphate + H(+). Functionally, catalyzes the GTP-dependent ribosomal translocation step during translation elongation. During this step, the ribosome changes from the pre-translocational (PRE) to the post-translocational (POST) state as the newly formed A-site-bound peptidyl-tRNA and P-site-bound deacylated tRNA move to the P and E sites, respectively. Catalyzes the coordinated movement of the two tRNA molecules, the mRNA and conformational changes in the ribosome. The chain is Elongation factor 2 (EFT2) from Candida albicans (strain SC5314 / ATCC MYA-2876) (Yeast).